Reading from the N-terminus, the 184-residue chain is dCTP deaminase (184 aa).

DCTP-binding positions include 107 to 112 (KSTYAR), 131 to 133 (TLE), Q152, Y166, and Q176. E133 acts as the Proton donor/acceptor in catalysis.

This sequence belongs to the dCTP deaminase family. As to quaternary structure, homotrimer.

The enzyme catalyses dCTP + H2O + H(+) = dUTP + NH4(+). The protein operates within pyrimidine metabolism; dUMP biosynthesis; dUMP from dCTP (dUTP route): step 1/2. In terms of biological role, catalyzes the deamination of dCTP to dUTP. In Rhodospirillum centenum (strain ATCC 51521 / SW), this protein is dCTP deaminase.